Consider the following 509-residue polypeptide: Zinc metalloproteinase aureolysin (509 aa).

An N-terminal signal peptide occupies residues 1–27 (MRKFSRYAFTSMATVTLLSSLTPAALA). The propeptide occupies 28-208 (SDTNHKPATS…VVEKTNLVKE (181 aa)). D348 is a binding site for Ca(2+). H352 contributes to the Zn(2+) binding site. E353 is an active-site residue. Zn(2+)-binding residues include H356 and E376. Ca(2+) is bound by residues D387, E389, D390, L392, E395, Y398, T399, K402, and D405. H436 serves as the catalytic Proton donor.

The protein belongs to the peptidase M4 family. As to quaternary structure, monomer. The cofactor is Ca(2+). Zn(2+) is required as a cofactor.

The enzyme catalyses Cleavage of insulin B chain with specificity similar to that of thermolysin, preferring hydrophobic P1' residues. Activates the glutamyl endopeptidase (EC 3.4.21.19) of Staphylococcus aureus.. Plays an essential role in immune evasion by helping bacteria to resist complement-mediated killing by neutrophils. Inhibits the deposition of host C3b on bacterial surfaces and the release of the chemoattractant C5a by cleaving the central complement protein C3. The cleavage site renders the C3b molecule vulnerable to proteolytic degradation by host regulators. Cleaves and inactivates host SERPINA1, which is an endogenous protease inhibitor essential for controlling neutrophil serine protease elastase. Also plays an essential role in the cleavage and subsequent activation of the serine protease SspA (glutamyl endopeptidase) which is involved in colonization and infection of human tissues. This chain is Zinc metalloproteinase aureolysin, found in Staphylococcus aureus.